Here is an 898-residue protein sequence, read N- to C-terminus: Alanine--tRNA ligase (898 aa).

4 residues coordinate Zn(2+): His-564, His-568, Cys-682, and His-686.

This sequence belongs to the class-II aminoacyl-tRNA synthetase family. Zn(2+) serves as cofactor.

Its subcellular location is the cytoplasm. It carries out the reaction tRNA(Ala) + L-alanine + ATP = L-alanyl-tRNA(Ala) + AMP + diphosphate. In terms of biological role, catalyzes the attachment of alanine to tRNA(Ala) in a two-step reaction: alanine is first activated by ATP to form Ala-AMP and then transferred to the acceptor end of tRNA(Ala). Also edits incorrectly charged Ser-tRNA(Ala) and Gly-tRNA(Ala) via its editing domain. This is Alanine--tRNA ligase from Beijerinckia indica subsp. indica (strain ATCC 9039 / DSM 1715 / NCIMB 8712).